The primary structure comprises 2813 residues: von Willebrand factor (2813 aa).

The first 22 residues, 1 to 22 (MSPTRLVRVLLALALILPGKLC), serve as a signal peptide directing secretion. Residues 23–763 (TKGTVGRSSM…SSPRSHRSKR (741 aa)) constitute a propeptide that is removed on maturation. The 169-residue stretch at 33-201 (ARCSLFGGDF…ALSSGEQRCK (169 aa)) folds into the VWFD 1 domain. Cystine bridges form between C35–C162 and C57–C200. N99, N156, and N211 each carry an N-linked (GlcNAc...) asparagine glycan. Positions 295–348 (CPAGMEYKECVSPCTRTCQSLHVKEVCQEQCVDGCSCPEGQLLDEGHCVGSAEC) constitute a TIL 1 domain. Residues 386 to 560 (GECLVTGQSH…NAWKLLGACE (175 aa)) form the VWFD 2 domain. Intrachain disulfides connect C388-C524, C410-C559, and C432-C440. The short motif at 531–533 (RGD) is the Cell attachment site element. 2 TIL domains span residues 652–707 (CPQG…KAQC) and 776–827 (CPAD…LERC). A glycan (N-linked (GlcNAc...) asparagine) is linked at N666. A Cell attachment site motif is present at residues 698–700 (RGD). The amino-terminal stretch occupies residues 764-787 (SLSCRPPMVKLVCPADNPRAEGLE). Cystine bridges form between C767–C808, C776–C804, and C810–C821. The E1 stretch occupies residues 788 to 833 (CAKTCQNYDLQCMSTGCVSGCLCPQGMVRHENRCVALERCPCFHQG). Residues 826–853 (RCPCFHQGQEYAPGETVKIDCNTCVCRD) form a CX region. An N-linked (GlcNAc...) asparagine glycan is attached at N857. Residues 865–1032 (ATCSAIGMAH…NSWKVNPQCA (168 aa)) form the VWFD 3 domain. Intrachain disulfides connect C867/C996, C889/C1031, C898/C993, C914/C921, C1060/C1084, C1071/C1111, C1089/C1091, C1126/C1130, C1149/C1169, C1153/C1165, and C1196/C1199. The TIL 4 domain maps to 1146–1196 (YNSCAPACPITCQHPEPLACPVQCVEGCHAHCPPGKILDELLQTCIDPEDC). A glycan (N-linked (GlcNAc...) asparagine) is linked at N1231. Cystine bridges form between C1234/C1237 and C1272/C1458. 2 VWFA domains span residues 1277–1453 (DLVF…RDEI) and 1498–1665 (DVVF…PDLV). Residues N1515 and N1574 are each glycosylated (N-linked (GlcNAc...) asparagine). 8 cysteine pairs are disulfide-bonded: C1669–C1670, C1686–C1872, C1879–C1904, C1899–C1940, C1927–C2088, C1950–C2085, C1972–C2123, and C1993–C2001. One can recognise a VWFA 3 domain in the interval 1691–1871 (DVVLLLDGSS…TLGNSFFHKL (181 aa)). Residues 1948–2124 (CVCMGSSTRH…TVQQLGKTCQ (177 aa)) form the VWFD 4 domain. Residues 2216-2261 (CPRLCEGNTSSCGDQPSEGCFCPPNQVMLEGSCVPEEACTQCISED) form an E2 region. N-linked (GlcNAc...) asparagine glycans are attached at residues N2223, N2290, N2357, and N2400. Residues 2255–2328 (TQCISEDGVR…CCPEYECVCD (74 aa)) enclose the VWFC 1 domain. In terms of domain architecture, VWFC 2 spans 2429 to 2495 (KVCVHRGTIY…HEGECCGRCL (67 aa)). The short motif at 2507–2509 (RGD) is the Cell attachment site element. Residues N2546 and N2585 are each glycosylated (N-linked (GlcNAc...) asparagine). Positions 2580-2645 (EACLLNGTII…NQGECCGRCL (66 aa)) constitute a VWFC 3 domain. 4 disulfides stabilise this stretch: C2724-C2774, C2739-C2788, C2750-C2804, and C2754-C2806. Residues 2724–2812 (CKDIIAKLQR…QCRCSPRKCS (89 aa)) form the CTCK domain. N-linked (GlcNAc...) asparagine glycosylation is present at N2790.

In terms of assembly, multimeric. Interacts with F8. Post-translationally, all cysteine residues are involved in intrachain or interchain disulfide bonds. N- and O-glycosylated. In terms of tissue distribution, plasma.

Its subcellular location is the secreted. The protein localises to the extracellular space. It localises to the extracellular matrix. Important in the maintenance of hemostasis, it promotes adhesion of platelets to the sites of vascular injury by forming a molecular bridge between sub-endothelial collagen matrix and platelet-surface receptor complex, glycoprotein Ibalpha/IX/V. Also acts as a chaperone for coagulation factor VIII, delivering it to the site of injury, stabilizing its heterodimeric structure and protecting it from premature clearance from plasma. The polypeptide is von Willebrand factor (VWF) (Canis lupus familiaris (Dog)).